The sequence spans 51 residues: Mitochondrial import receptor subunit TOM5 homolog (51 aa).

Met1 carries the N-acetylmethionine modification. Lys10 is covalently cross-linked (Glycyl lysine isopeptide (Lys-Gly) (interchain with G-Cter in SUMO2)). Residues 27–45 (SIRNFLIYVALLRVTPFIL) form a helical membrane-spanning segment.

This sequence belongs to the Tom5 family. Forms part of the preprotein translocase complex of the outer mitochondrial membrane (TOM complex) which consists of at least 7 different proteins (TOMM5, TOMM6, TOMM7, TOMM20, TOMM22, TOMM40 and TOMM70).

It is found in the mitochondrion outer membrane. This chain is Mitochondrial import receptor subunit TOM5 homolog, found in Bos taurus (Bovine).